The following is a 213-amino-acid chain: MRSGVIAQKVGMTRVYNDAGEHVPVTVLRMDGCQVVATRTVEKNGYTAVQLGAGQAKVKNTSKAMRGNFAVANVEPKAKLAEFRVSEDNLLEIGTELKAGHFAAGQLVDVTGTTIGKGFAGAMKRHGFGGLRATHGVSVSHRSHGSTGSRQDPGKVFKNKKMAGHMGQTRVTTQNLEVVSTDEDRGLILIKGAVPGSKGAWIIVRDAVKSAAK.

Glutamine 151 carries the N5-methylglutamine modification.

This sequence belongs to the universal ribosomal protein uL3 family. In terms of assembly, part of the 50S ribosomal subunit. Forms a cluster with proteins L14 and L19. Post-translationally, methylated by PrmB.

Functionally, one of the primary rRNA binding proteins, it binds directly near the 3'-end of the 23S rRNA, where it nucleates assembly of the 50S subunit. This is Large ribosomal subunit protein uL3 from Rhizobium etli (strain CIAT 652).